We begin with the raw amino-acid sequence, 687 residues long: Outer dynein arm-docking complex subunit 1 (687 aa).

3 coiled-coil regions span residues 100 to 193 (QVRV…YLNV), 222 to 267 (REEA…LKLK), and 341 to 421 (INEQ…LFTR). A disordered region spans residues 126–147 (SRNSAHSKNARSPGCVQHDKVK). Disordered regions lie at residues 363 to 388 (VSGR…QRVD), 487 to 511 (FPKK…AKDD), and 540 to 687 (ESTP…QSNY). Positions 366-388 (RRSEEDRRAQQEQQRAELQQRVD) are enriched in basic and acidic residues. Over residues 544–556 (SMTSSTQKVSSSS) the composition is skewed to low complexity. 2 stretches are compositionally biased toward polar residues: residues 557-611 (RLVT…SSRG) and 620-629 (RSPNSSSYLG). The segment covering 660–680 (SPGPASSPGPASSTGQASSTS) has biased composition (low complexity).

The protein belongs to the ODA1/DCC2 family. In terms of assembly, component of the outer dynein arm-docking complex along with ODAD2, ODAD3, ODAD4 and CLXN. Interacts with ODAD3. Interacts with ODAD4; this interaction may facilitate the recruitment and/or attachment of outer dynein arm docking complex proteins, including ODAD1, ODAD3, and ODAD4 to ciliary axonemes. Interacts with DNAH9. Interacts with MNS1. Interacts with PIERCE1 and PIERCE2; the interactions link the outer dynein arms docking complex (ODA-DC) to the internal microtubule inner proteins (MIP) in cilium axoneme. As to expression, expressed in trachea multiciliated cells.

It is found in the cytoplasm. Its subcellular location is the cytoskeleton. The protein resides in the cilium axoneme. In terms of biological role, component of the outer dynein arm-docking complex (ODA-DC) that mediates outer dynein arms (ODA) binding onto the doublet microtubule. Involved in mediating assembly of both ODAs and their axonemal docking complex onto ciliary microtubules. This is Outer dynein arm-docking complex subunit 1 (ODAD1) from Bos taurus (Bovine).